Consider the following 124-residue polypeptide: MAADLGQIPDVDIDSDGVFKYVLIRVHLAEPSGDPAKECKEIVRGYKWAEYHADIYDKVSGELQRNGYDCECLGGGRISHQSQDRKIHVYGYSMGYGRAQHSVSTEKIKAKYPDYEVTWADDGY.

Lysine 20 is a binding site for substrate. Residue histidine 52 is the Proton acceptor of the active site. 93–95 is a substrate binding site; the sequence is SMG.

This sequence belongs to the janus family. As to quaternary structure, monomer.

Its subcellular location is the cytoplasm. It carries out the reaction N(pros)-phospho-L-histidyl-[protein] + H2O = L-histidyl-[protein] + phosphate. The enzyme catalyses N(tele)-phospho-L-histidyl-[protein] + H2O = L-histidyl-[protein] + phosphate. Functionally, exhibits phosphohistidine phosphatase activity. In Mus musculus (Mouse), this protein is 14 kDa phosphohistidine phosphatase (Phpt1).